Reading from the N-terminus, the 235-residue chain is MNKLTLLHEGKAKKVWQTDDPDLIIQEFKDDATAFNNKKKGSIADKGVTNNAIASRLFTMLGENGIPTHFVSKLNDRDMLCKKLDILLIEVVTRNVAAGSLVRRYGFAEGTVLEKPIVELYLKNDDLDDPLMNEDHAVALGLGTYEEVAQLKDMAEKINSLLVPWFAERKLRLVDFKLEFGRHKGEILLGDEISPDTCRFWDAESGEKLDKDRFRLDLGGVEDAYSEVKRRVLEQ.

Belongs to the SAICAR synthetase family.

It carries out the reaction 5-amino-1-(5-phospho-D-ribosyl)imidazole-4-carboxylate + L-aspartate + ATP = (2S)-2-[5-amino-1-(5-phospho-beta-D-ribosyl)imidazole-4-carboxamido]succinate + ADP + phosphate + 2 H(+). It functions in the pathway purine metabolism; IMP biosynthesis via de novo pathway; 5-amino-1-(5-phospho-D-ribosyl)imidazole-4-carboxamide from 5-amino-1-(5-phospho-D-ribosyl)imidazole-4-carboxylate: step 1/2. This chain is Phosphoribosylaminoimidazole-succinocarboxamide synthase, found in Chlorobaculum parvum (strain DSM 263 / NCIMB 8327) (Chlorobium vibrioforme subsp. thiosulfatophilum).